A 378-amino-acid polypeptide reads, in one-letter code: D-alanine--D-alanine ligase (378 aa).

The 207-residue stretch at 141–347 (KKLLTLNGIR…YSELIDQLIQ (207 aa)) folds into the ATP-grasp domain. 171–226 (AEELGETLFVKPARQGSSVGIHKVRNEEEYNAALEDGFKYDYKILVEEAIKNPREV) contacts ATP. Residues aspartate 301, glutamate 314, and asparagine 316 each coordinate Mg(2+).

The protein belongs to the D-alanine--D-alanine ligase family. Mg(2+) serves as cofactor. It depends on Mn(2+) as a cofactor.

It is found in the cytoplasm. It catalyses the reaction 2 D-alanine + ATP = D-alanyl-D-alanine + ADP + phosphate + H(+). It participates in cell wall biogenesis; peptidoglycan biosynthesis. Cell wall formation. The chain is D-alanine--D-alanine ligase from Ligilactobacillus salivarius (strain UCC118) (Lactobacillus salivarius).